Reading from the N-terminus, the 142-residue chain is NTF2-related export protein 2 (142 aa).

The NTF2 domain occupies 17–136 (AAEEFVNIYY…WKIASDCFRF (120 aa)).

As to quaternary structure, associates with NXF1, NXF2, NXF3 and NXF5.

Its subcellular location is the nucleus. It localises to the cytoplasm. Its function is as follows. Regulator of protein export for NES-containing proteins. Also plays a role in mRNA nuclear export. The chain is NTF2-related export protein 2 from Homo sapiens (Human).